The following is a 363-amino-acid chain: tRNA/tmRNA (uracil-C(5))-methyltransferase (363 aa).

Residues Q187, Y215, N220, E236, and D296 each coordinate S-adenosyl-L-methionine. C321 acts as the Nucleophile in catalysis. The Proton acceptor role is filled by E355.

Belongs to the class I-like SAM-binding methyltransferase superfamily. RNA M5U methyltransferase family. TrmA subfamily.

It carries out the reaction uridine(54) in tRNA + S-adenosyl-L-methionine = 5-methyluridine(54) in tRNA + S-adenosyl-L-homocysteine + H(+). The catalysed reaction is uridine(341) in tmRNA + S-adenosyl-L-methionine = 5-methyluridine(341) in tmRNA + S-adenosyl-L-homocysteine + H(+). Its function is as follows. Dual-specificity methyltransferase that catalyzes the formation of 5-methyluridine at position 54 (m5U54) in all tRNAs, and that of position 341 (m5U341) in tmRNA (transfer-mRNA). In Pseudomonas aeruginosa (strain UCBPP-PA14), this protein is tRNA/tmRNA (uracil-C(5))-methyltransferase.